Reading from the N-terminus, the 139-residue chain is Translation initiation factor 2 subunit beta (139 aa).

The protein belongs to the eIF-2-beta/eIF-5 family. As to quaternary structure, heterotrimer composed of an alpha, a beta and a gamma chain.

Functionally, eIF-2 functions in the early steps of protein synthesis by forming a ternary complex with GTP and initiator tRNA. This chain is Translation initiation factor 2 subunit beta, found in Saccharolobus islandicus (strain Y.N.15.51 / Yellowstone #2) (Sulfolobus islandicus).